The chain runs to 210 residues: Thymidylate kinase (210 aa).

10–17 (GLEGAGKS) contributes to the ATP binding site.

The protein belongs to the thymidylate kinase family.

It carries out the reaction dTMP + ATP = dTDP + ADP. Phosphorylation of dTMP to form dTDP in both de novo and salvage pathways of dTTP synthesis. This Haemophilus influenzae (strain PittGG) protein is Thymidylate kinase.